We begin with the raw amino-acid sequence, 202 residues long: Snake venom metalloproteinase atroxlysin-1 (202 aa).

Positions 6 to 202 constitute a Peptidase M12B domain; the sequence is RYVDLFIVVD…ENPQCILNKR (197 aa). Ca(2+)-binding residues include D9 and D93. 3 disulfide bridges follow: C117/C197, C157/C181, and C159/C164. H142 contributes to the Zn(2+) binding site. E143 is an active-site residue. The Zn(2+) site is built by H146 and H152. Ca(2+) is bound by residues C197 and N200.

Belongs to the venom metalloproteinase (M12B) family. P-I subfamily. As to quaternary structure, monomer. It depends on Zn(2+) as a cofactor. As to expression, expressed by the venom gland.

It is found in the secreted. Inhibited by EDTA, DTT and high concentrations of zinc ions (&gt;2 mM). Weakly inhibited by TLCK. Not inhibited by PMSF. Activated by calcium ions. Its function is as follows. Snake venom zinc metalloproteinase that acts on fibrinogen, fibrin, fibronectin (FN1), type I collagen, type IV collagen, integrin alpha-7/beta-1 (ITGA7/ITGB1) and integrin alpha-1/beta-1 (ITGA1/ITGB1). Binds to fibronectin (FN1), fibrinogen and, weakly, to type I collagen and laminin. Cleaves Xaa-Leu bonds. Inhibits ADP- and collagen-induced platelet aggregation both in the presence (IC(50)=1.4 uM for collagen) and in the absence (IC(50)=2.2 uM for collagen) of cofactors. Has hemorrhagic activity. In Bothrops atrox (Barba amarilla), this protein is Snake venom metalloproteinase atroxlysin-1.